Consider the following 145-residue polypeptide: Probable 4-amino-4-deoxy-L-arabinose-phosphoundecaprenol flippase subunit ArnF (145 aa).

Residues Met1–His3 are Cytoplasmic-facing. Residues Leu4–Ala24 form a helical membrane-spanning segment. Residues Gln25–Pro61 are Periplasmic-facing. Residues Val62–Ala82 form a helical membrane-spanning segment. Residues Leu83–Ser89 are Cytoplasmic-facing. A helical transmembrane segment spans residues Ile90–Pro110. Topologically, residues Trp111–Glu114 are periplasmic. Residues Pro115 to Leu135 form a helical membrane-spanning segment. Residues Pro136–Ser145 lie on the Cytoplasmic side of the membrane.

The protein belongs to the ArnF family. Heterodimer of ArnE and ArnF.

It is found in the cell inner membrane. Its pathway is bacterial outer membrane biogenesis; lipopolysaccharide biosynthesis. In terms of biological role, translocates 4-amino-4-deoxy-L-arabinose-phosphoundecaprenol (alpha-L-Ara4N-phosphoundecaprenol) from the cytoplasmic to the periplasmic side of the inner membrane. The polypeptide is Probable 4-amino-4-deoxy-L-arabinose-phosphoundecaprenol flippase subunit ArnF (Shewanella sediminis (strain HAW-EB3)).